The sequence spans 220 residues: Large ribosomal subunit protein uL10c (220 aa).

The N-terminal 41 residues, 1–41, are a transit peptide targeting the chloroplast; that stretch reads MEVALLSFSSSLSPLCHQRISTLTPKTSNSPNYPRLPVIRS.

This sequence belongs to the universal ribosomal protein uL10 family. Part of the 50S ribosomal subunit.

It is found in the plastid. Its subcellular location is the chloroplast. Its function is as follows. This protein binds directly to 23S ribosomal RNA. The protein is Large ribosomal subunit protein uL10c (RPL10) of Arabidopsis thaliana (Mouse-ear cress).